The sequence spans 281 residues: Probable endonuclease 4 (281 aa).

Zn(2+) contacts are provided by histidine 69, histidine 109, glutamate 145, aspartate 179, histidine 182, histidine 216, aspartate 229, histidine 231, and glutamate 261.

It belongs to the AP endonuclease 2 family. It depends on Zn(2+) as a cofactor.

The catalysed reaction is Endonucleolytic cleavage to 5'-phosphooligonucleotide end-products.. In terms of biological role, endonuclease IV plays a role in DNA repair. It cleaves phosphodiester bonds at apurinic or apyrimidinic (AP) sites, generating a 3'-hydroxyl group and a 5'-terminal sugar phosphate. This chain is Probable endonuclease 4, found in Proteus mirabilis (strain HI4320).